Consider the following 171-residue polypeptide: MNGRTQNLWFSTFRLVIVYALFFAKLCFGQEECLRGGCYPATGDLLVGRENRITATSTCGLKERTTGVCNNCLHNTKGTNCQLCKDGYYGNALLGTENVCQRCQCPGGSSGNQFSNTCELRDVGKVFCTNCSEGFTGTQCEKCDNGYYGNPLIQGGTCKKCLCNGNINSAS.

An N-terminal signal peptide occupies residues 1–29 (MNGRTQNLWFSTFRLVIVYALFFAKLCFG). Disulfide bonds link C59–C69, C72–C81, C84–C100, C103–C118, and C105–C128. 3 consecutive Laminin EGF-like domains span residues 66–102 (TGVCNNCLHNTKGTNCQLCKDGYYGNALLGTENVCQR), 103–160 (CQCP…TCKK), and 161–171 (CLCNGNINSAS). The N-linked (GlcNAc...) asparagine glycan is linked to N130. 2 disulfide bridges follow: C131-C140 and C143-C158.

In terms of assembly, laminin is a complex glycoprotein, consisting of three different polypeptide chains (alpha, beta, gamma), which are bound to each other by disulfide bonds into a cross-shaped molecule comprising one long and three short arms with globules at each end.

The protein resides in the secreted. It is found in the extracellular space. Its subcellular location is the extracellular matrix. The protein localises to the basement membrane. Functionally, binding to cells via a high affinity receptor, laminin is thought to mediate the attachment, migration and organization of cells into tissues during embryonic development by interacting with other extracellular matrix components. This is Laminin subunit beta-1 from Hydra vulgaris (Hydra).